The primary structure comprises 514 residues: MSGKSAAKFSPAGRLTAEDLGAIHLIGAGGVGMSGLARLFLTRGISVSGSELREWPSLAGLRALGGTIHMSHEVANLDGVDTVVYSSAIPSDHLELVEARRRGLRVLHRSEALATAMTGRRTVAVAGTHGKTTTTSMVTMVLQQAGVDPSFVIGGEISEVGSGAHHGTGDYFVVEADESDRSFLIYRPFVSIITNIEADHLNTYGDLANLEAAFADFARLTDPDGFIITCADDVGGRRLAETLRAEGRRVYTYGISTDADLRLTEMASSTRGIRYLAEIDGRSLGEFRLPVPGRHMGLNSASAVLAEYLLDLPLEAAQSALAAFPGVRRRFERKGVADDVLVYDEYAYHPTPIALALRTLREVAGDGGLIVVFQPYRLYRTRDLQAEIAEALAIADELVLLEVFGPGELREPGEGSAALIEAVPLPVDRKVFVDSWDAAPVEVARRAKPGDVVVTMGAPPSSLMGDQLLDALSRRGAAGPAGTVPGGDVGGATTIGGTIPDIPGGSTPDASAAG.

127–133 serves as a coordination point for ATP; that stretch reads GTHGKTT. Low complexity predominate over residues 495 to 505; it reads IGGTIPDIPGG. Positions 495-514 are disordered; the sequence is IGGTIPDIPGGSTPDASAAG.

The protein belongs to the MurCDEF family.

It localises to the cytoplasm. The catalysed reaction is UDP-N-acetyl-alpha-D-muramate + L-alanine + ATP = UDP-N-acetyl-alpha-D-muramoyl-L-alanine + ADP + phosphate + H(+). The protein operates within cell wall biogenesis; peptidoglycan biosynthesis. In terms of biological role, cell wall formation. This chain is UDP-N-acetylmuramate--L-alanine ligase, found in Salinispora tropica (strain ATCC BAA-916 / DSM 44818 / JCM 13857 / NBRC 105044 / CNB-440).